The chain runs to 420 residues: 3-isopropylmalate dehydratase large subunit (420 aa).

The [4Fe-4S] cluster site is built by C300, C360, and C363.

Belongs to the aconitase/IPM isomerase family. LeuC type 2 subfamily. Heterodimer of LeuC and LeuD. Requires [4Fe-4S] cluster as cofactor.

It catalyses the reaction (2R,3S)-3-isopropylmalate = (2S)-2-isopropylmalate. It functions in the pathway amino-acid biosynthesis; L-leucine biosynthesis; L-leucine from 3-methyl-2-oxobutanoate: step 2/4. In terms of biological role, catalyzes the isomerization between 2-isopropylmalate and 3-isopropylmalate, via the formation of 2-isopropylmaleate. In Helicobacter hepaticus (strain ATCC 51449 / 3B1), this protein is 3-isopropylmalate dehydratase large subunit.